Here is a 114-residue protein sequence, read N- to C-terminus: Hydrogenase maturation factor HypA (114 aa).

His2 provides a ligand contact to Ni(2+). The Zn(2+) site is built by Cys70, Cys73, Cys86, and Cys89.

The protein belongs to the HypA/HybF family.

Involved in the maturation of [NiFe] hydrogenases. Required for nickel insertion into the metal center of the hydrogenase. The chain is Hydrogenase maturation factor HypA from Rippkaea orientalis (strain PCC 8801 / RF-1) (Cyanothece sp. (strain PCC 8801)).